Reading from the N-terminus, the 469-residue chain is 3-isopropylmalate dehydratase large subunit (469 aa).

The [4Fe-4S] cluster site is built by Cys-350, Cys-410, and Cys-413.

This sequence belongs to the aconitase/IPM isomerase family. LeuC type 1 subfamily. Heterodimer of LeuC and LeuD. [4Fe-4S] cluster serves as cofactor.

It catalyses the reaction (2R,3S)-3-isopropylmalate = (2S)-2-isopropylmalate. Its pathway is amino-acid biosynthesis; L-leucine biosynthesis; L-leucine from 3-methyl-2-oxobutanoate: step 2/4. Catalyzes the isomerization between 2-isopropylmalate and 3-isopropylmalate, via the formation of 2-isopropylmaleate. The protein is 3-isopropylmalate dehydratase large subunit of Chelativorans sp. (strain BNC1).